The primary structure comprises 417 residues: Histidine--tRNA ligase (417 aa).

This sequence belongs to the class-II aminoacyl-tRNA synthetase family. Homodimer.

The protein resides in the cytoplasm. It carries out the reaction tRNA(His) + L-histidine + ATP = L-histidyl-tRNA(His) + AMP + diphosphate + H(+). This chain is Histidine--tRNA ligase, found in Nitratidesulfovibrio vulgaris (strain ATCC 29579 / DSM 644 / CCUG 34227 / NCIMB 8303 / VKM B-1760 / Hildenborough) (Desulfovibrio vulgaris).